A 271-amino-acid chain; its full sequence is Shikimate dehydrogenase (NADP(+)) (271 aa).

Residues 19 to 21 (SLS) and Thr-65 contribute to the shikimate site. The active-site Proton acceptor is Lys-69. Residue Glu-81 coordinates NADP(+). Asn-90 and Asp-105 together coordinate shikimate. Residues 128 to 132 (GAGGA), 150 to 155 (NRTIEK), and Ile-211 each bind NADP(+). Tyr-213 provides a ligand contact to shikimate. NADP(+) is bound at residue Gly-234.

The protein belongs to the shikimate dehydrogenase family. As to quaternary structure, homodimer.

It catalyses the reaction shikimate + NADP(+) = 3-dehydroshikimate + NADPH + H(+). It functions in the pathway metabolic intermediate biosynthesis; chorismate biosynthesis; chorismate from D-erythrose 4-phosphate and phosphoenolpyruvate: step 4/7. Involved in the biosynthesis of the chorismate, which leads to the biosynthesis of aromatic amino acids. Catalyzes the reversible NADPH linked reduction of 3-dehydroshikimate (DHSA) to yield shikimate (SA). The chain is Shikimate dehydrogenase (NADP(+)) from Pyrococcus furiosus (strain ATCC 43587 / DSM 3638 / JCM 8422 / Vc1).